A 184-amino-acid polypeptide reads, in one-letter code: dITP/XTP pyrophosphatase (184 aa).

5–10 is a substrate binding site; sequence SSNRHK. Positions 33 and 62 each coordinate Mg(2+). Asp62 acts as the Proton acceptor in catalysis. Substrate contacts are provided by residues Ser63, 136–139, Lys158, and 163–164; these read WGFD and HR.

Belongs to the HAM1 NTPase family. In terms of assembly, homodimer. The cofactor is Mg(2+).

The catalysed reaction is XTP + H2O = XMP + diphosphate + H(+). The enzyme catalyses dITP + H2O = dIMP + diphosphate + H(+). It catalyses the reaction ITP + H2O = IMP + diphosphate + H(+). In terms of biological role, pyrophosphatase that catalyzes the hydrolysis of nucleoside triphosphates to their monophosphate derivatives, with a high preference for the non-canonical purine nucleotides XTP (xanthosine triphosphate), dITP (deoxyinosine triphosphate) and ITP. Seems to function as a house-cleaning enzyme that removes non-canonical purine nucleotides from the nucleotide pool, thus preventing their incorporation into DNA/RNA and avoiding chromosomal lesions. The polypeptide is dITP/XTP pyrophosphatase (Korarchaeum cryptofilum (strain OPF8)).